Here is a 263-residue protein sequence, read N- to C-terminus: MVLVYKYFSCENEIENSIKPVINLMESSLLDKTTSNSIVLTTFNDFSNWARLSSLWPLLYGTSCCFIESASLIGSRSDSDRYGLVPRSSPRQADLVITAGTVTMKMAPSLVRLYEQMPEPKYVIAMGACTITGGMFSTDSYSTVRGVDKPIPVDVYLPGCPPKPEAIIDAIVKLRKRVAQETYESKIRLKPGNRFFTSIHQFRFVSNNLTGEYSKQSLRQFTKTELYSTLEVPFDETTDEYKGSAVSFQESMDEGDPVAIDKP.

The [4Fe-4S] cluster site is built by cysteine 64, cysteine 65, cysteine 129, and cysteine 160.

This sequence belongs to the complex I 20 kDa subunit family. In terms of assembly, NDH is composed of at least 16 different subunits, 5 of which are encoded in the nucleus. [4Fe-4S] cluster is required as a cofactor.

The protein resides in the plastid. Its subcellular location is the chloroplast thylakoid membrane. It carries out the reaction a plastoquinone + NADH + (n+1) H(+)(in) = a plastoquinol + NAD(+) + n H(+)(out). It catalyses the reaction a plastoquinone + NADPH + (n+1) H(+)(in) = a plastoquinol + NADP(+) + n H(+)(out). NDH shuttles electrons from NAD(P)H:plastoquinone, via FMN and iron-sulfur (Fe-S) centers, to quinones in the photosynthetic chain and possibly in a chloroplast respiratory chain. The immediate electron acceptor for the enzyme in this species is believed to be plastoquinone. Couples the redox reaction to proton translocation, and thus conserves the redox energy in a proton gradient. This is NAD(P)H-quinone oxidoreductase subunit K, chloroplastic (ndhK) from Huperzia lucidula (Shining clubmoss).